The following is a 424-amino-acid chain: Serine hydroxymethyltransferase (424 aa).

(6S)-5,6,7,8-tetrahydrofolate-binding positions include L118 and 122–124 (GHL). K227 bears the N6-(pyridoxal phosphate)lysine mark. (6S)-5,6,7,8-tetrahydrofolate is bound at residue 351–353 (SPF).

Belongs to the SHMT family. Homodimer. Requires pyridoxal 5'-phosphate as cofactor.

It is found in the cytoplasm. It carries out the reaction (6R)-5,10-methylene-5,6,7,8-tetrahydrofolate + glycine + H2O = (6S)-5,6,7,8-tetrahydrofolate + L-serine. It participates in one-carbon metabolism; tetrahydrofolate interconversion. The protein operates within amino-acid biosynthesis; glycine biosynthesis; glycine from L-serine: step 1/1. In terms of biological role, catalyzes the reversible interconversion of serine and glycine with tetrahydrofolate (THF) serving as the one-carbon carrier. This reaction serves as the major source of one-carbon groups required for the biosynthesis of purines, thymidylate, methionine, and other important biomolecules. Also exhibits THF-independent aldolase activity toward beta-hydroxyamino acids, producing glycine and aldehydes, via a retro-aldol mechanism. This is Serine hydroxymethyltransferase from Thermosipho melanesiensis (strain DSM 12029 / CIP 104789 / BI429).